A 470-amino-acid polypeptide reads, in one-letter code: MTPPPNSISSRNVAVIGAGAAGLVAARELRREGHTVTIFERQKQVGGLWVCTPNVEPDLLSIDPDRTVVHSSVYQSLRTNLPRECMGYSDFPFVTRPDDESRDPRRYPDHREVMRYLQDFAKEFKIEEMIRFETEVFRVEPTAENSCKWRVQFRSSSGVSGEDIFDAVVICNGHFTEPRLAHIPGIESWPGKQIHSHNYRVSDPFKGQVVIVIGYQSSGSDISRDIAILAKEVHIAAKSDAYAKESSIYSNLHFHPTIDRVYEDGSVVFQDGKLIFADAIVHCTGYKYCFPFLETKGYVNVEDNRVGPLYKHVFPPALAPGLSFIGLPSMALQFFMFEIQSRWVASVLSGRVKLPSEEQMMEDVIAFYAKLKSLGIPKRFTHFLTDPQWTPMFEKLKPHEAVLISQSEYFNWIAEQCGCSSIERWREEQYNIAIKKDDDNFRDEWDDDDQIIQEAYRDFAKFKPSKVWST.

17 to 22 contacts FAD; sequence GAGAAG. 214 to 219 serves as a coordination point for NADP(+); the sequence is GYQSSG.

This sequence belongs to the FMO family. The cofactor is FAD.

Catalyzes the conversion of methylthioalkyl glucosinolates of any chain length into methylsulfinylalkyl glucosinolates. In Arabidopsis thaliana (Mouse-ear cress), this protein is Flavin-containing monooxygenase FMO GS-OX-like 6.